The chain runs to 530 residues: Tyrosinase (530 aa).

The first 17 residues, 1–17, serve as a signal peptide directing secretion; that stretch reads MLLAALYCLLWSFRTSA. Over 19 to 473 the chain is Lumenal, melanosome; that stretch reads HFPRACASSK…IKPYLEQAQR (455 aa). An N-linked (GlcNAc...) asparagine glycan is attached at asparagine 86. 3 residues coordinate Cu cation: histidine 180, histidine 202, and histidine 211. Residues asparagine 230, asparagine 290, and asparagine 337 are each glycosylated (N-linked (GlcNAc...) asparagine). 2 residues coordinate Cu cation: histidine 363 and histidine 367. N-linked (GlcNAc...) asparagine glycosylation is present at asparagine 371. Histidine 390 provides a ligand contact to Cu cation. The helical transmembrane segment at 474-494 threads the bilayer; that stretch reads IWPWLIGAAVVGSVLTAVLGG. The Cytoplasmic portion of the chain corresponds to 495-530; that stretch reads LTSLLCRRKRNQLPEEKQPLLMEKEDYHNLMYQSHL.

The protein belongs to the tyrosinase family. As to quaternary structure, forms an OPN3-dependent complex with DCT in response to blue light in melanocytes. Requires Cu(2+) as cofactor. Post-translationally, glycosylated.

The protein localises to the melanosome membrane. It localises to the melanosome. The catalysed reaction is 2 L-dopa + O2 = 2 L-dopaquinone + 2 H2O. The enzyme catalyses L-tyrosine + O2 = L-dopaquinone + H2O. It carries out the reaction 2 5,6-dihydroxyindole-2-carboxylate + O2 = 2 indole-5,6-quinone-2-carboxylate + 2 H2O. Functionally, this is a copper-containing oxidase that functions in the formation of pigments such as melanins and other polyphenolic compounds. Catalyzes the initial and rate limiting step in the cascade of reactions leading to melanin production from tyrosine. In addition to hydroxylating tyrosine to DOPA (3,4-dihydroxyphenylalanine), also catalyzes the oxidation of DOPA to DOPA-quinone, and possibly the oxidation of DHI (5,6-dihydroxyindole) to indole-5,6 quinone. The polypeptide is Tyrosinase (TYR) (Bos taurus (Bovine)).